We begin with the raw amino-acid sequence, 232 residues long: MGQKVHPNGIRLGIVKPWNSTWYANTKEFADNLDSDFKVRQFLTKELSKASVSRLVIERPAKSIRVTIHTARPGIVIGKKGEDVEKLRKVVADIAGVPAQINIAEVRKPELDAKLVADSISSQLERRVMFRRAMKRAVQNAMRLGAKGIKVEVSGRLGGAEIARTEWYREGRVPLHTLRADIDYNTSEAHTTYGVIGVKVWIFKGEILGGMAAVEQPEPAAQPKKQQRKGRK.

One can recognise a KH type-2 domain in the interval 39–107; sequence VRQFLTKELS…PAQINIAEVR (69 aa).

It belongs to the universal ribosomal protein uS3 family. As to quaternary structure, part of the 30S ribosomal subunit. Forms a tight complex with proteins S10 and S14.

Functionally, binds the lower part of the 30S subunit head. Binds mRNA in the 70S ribosome, positioning it for translation. This Sodalis glossinidius (strain morsitans) protein is Small ribosomal subunit protein uS3.